We begin with the raw amino-acid sequence, 813 residues long: Leucine--tRNA ligase (813 aa).

A 'HIGH' region motif is present at residues 40 to 51 (SYPSGSKLHAGH). The short motif at 572 to 576 (KMSKS) is the 'KMSKS' region element. Lys575 lines the ATP pocket.

Belongs to the class-I aminoacyl-tRNA synthetase family.

The protein resides in the cytoplasm. The catalysed reaction is tRNA(Leu) + L-leucine + ATP = L-leucyl-tRNA(Leu) + AMP + diphosphate. The chain is Leucine--tRNA ligase from Clostridium botulinum (strain ATCC 19397 / Type A).